The following is a 190-amino-acid chain: dCTP deaminase (190 aa).

DCTP is bound by residues 111–116, 135–137, glutamine 156, tyrosine 172, and glutamine 182; these read KSTYAR and TLE. Glutamate 137 functions as the Proton donor/acceptor in the catalytic mechanism.

This sequence belongs to the dCTP deaminase family. As to quaternary structure, homotrimer.

It carries out the reaction dCTP + H2O + H(+) = dUTP + NH4(+). It functions in the pathway pyrimidine metabolism; dUMP biosynthesis; dUMP from dCTP (dUTP route): step 1/2. Its function is as follows. Catalyzes the deamination of dCTP to dUTP. The polypeptide is dCTP deaminase (Stenotrophomonas maltophilia (strain K279a)).